Reading from the N-terminus, the 337-residue chain is Fructose-1,6-bisphosphatase class 1 (337 aa).

Mg(2+) is bound by residues Glu-89, Asp-112, Leu-114, and Asp-115. Substrate contacts are provided by residues 115–118, Asn-208, Tyr-241, and Lys-271; that span reads DGSS. Glu-277 contacts Mg(2+).

Belongs to the FBPase class 1 family. Homotetramer. It depends on Mg(2+) as a cofactor.

Its subcellular location is the cytoplasm. The enzyme catalyses beta-D-fructose 1,6-bisphosphate + H2O = beta-D-fructose 6-phosphate + phosphate. Its pathway is carbohydrate biosynthesis; gluconeogenesis. This is Fructose-1,6-bisphosphatase class 1 from Yersinia enterocolitica serotype O:8 / biotype 1B (strain NCTC 13174 / 8081).